The following is a 584-amino-acid chain: Dihydroxyacetone kinase 1 (584 aa).

At Ser2 the chain carries N-acetylserine. 2 positions are modified to phosphoserine: Ser2 and Ser5. One can recognise a DhaK domain in the interval 7–353; sequence EVTDPVNSSL…LNAFTNAPGW (347 aa). Residues 51 to 54, Lys103, and Asp108 contribute to the substrate site; that span reads GSGH. His220 serves as the catalytic Tele-hemiaminal-histidine intermediate. Phosphoserine is present on Ser365. The region spanning 386–582 is the DhaL domain; it reads DKFAEWMKSG…LCEFLKGVQS (197 aa). Residues 415–418 and 459–460 each bind ATP; these read DGDC and TS. Position 512 is a phosphoserine (Ser512). Residues 514–515 and 567–569 contribute to the ATP site; these read TM and DPG.

It belongs to the dihydroxyacetone kinase (DAK) family.

The enzyme catalyses dihydroxyacetone + ATP = dihydroxyacetone phosphate + ADP + H(+). It catalyses the reaction D-glyceraldehyde + ATP = D-glyceraldehyde 3-phosphate + ADP + H(+). Its pathway is polyol metabolism; glycerol fermentation; glycerone phosphate from glycerol (oxidative route): step 2/2. In terms of biological role, catalyzes both the phosphorylation of dihydroxyacetone and of glyceraldehyde. This chain is Dihydroxyacetone kinase 1 (DAK1), found in Saccharomyces cerevisiae (strain ATCC 204508 / S288c) (Baker's yeast).